Here is a 716-residue protein sequence, read N- to C-terminus: Translation initiation factor IF-2 (716 aa).

A disordered region spans residues 52–135 (QQESNNNTKQ…PAAEPKEMPS (84 aa)). Residues 56-125 (NNNTKQNTQN…KNNKGNKNNK (70 aa)) show a composition bias toward low complexity. The 170-residue stretch at 218–387 (ERPAVVTIMG…GLVAEVQELK (170 aa)) folds into the tr-type G domain. A G1 region spans residues 227–234 (GHVDHGKT). Residue 227 to 234 (GHVDHGKT) coordinates GTP. Residues 252-256 (GITQH) are G2. The interval 273 to 276 (DTPG) is G3. GTP-binding positions include 273–277 (DTPGH) and 327–330 (NKID). Residues 327-330 (NKID) form a G4 region. The segment at 363 to 365 (SAL) is G5.

This sequence belongs to the TRAFAC class translation factor GTPase superfamily. Classic translation factor GTPase family. IF-2 subfamily.

The protein resides in the cytoplasm. Its function is as follows. One of the essential components for the initiation of protein synthesis. Protects formylmethionyl-tRNA from spontaneous hydrolysis and promotes its binding to the 30S ribosomal subunits. Also involved in the hydrolysis of GTP during the formation of the 70S ribosomal complex. This is Translation initiation factor IF-2 from Staphylococcus haemolyticus (strain JCSC1435).